Here is a 177-residue protein sequence, read N- to C-terminus: MSSNECFKCGRSGHWARECPTGGGRGRGMRSRGRGGFTSDRGFQFVSSSLPDICYRCGESGHLAKDCDLQEDACYNCGRGGHIAKDCKEPKREREQCCYNCGKPGHLARDCDHADEQKCYSCGEFGHIQKDCTKVKCYRCGETGHVAINCSKTSEVNCYRCGESGHLARECTIEATA.

S2 is subject to N-acetylserine. The segment at 4-21 (NECFKCGRSGHWARECPT) adopts a CCHC-type 1 zinc-finger fold. Residue K8 is modified to N6-acetyllysine. Omega-N-methylarginine; by PRMT1 is present on residues R25 and R27. Positions 25 to 38 (RGRGMRSRGRGGFT) are RNA-binding Arg/Gly-rich region (RGG-box). Omega-N-methylarginine occurs at positions 32 and 34. S49 carries the phosphoserine modification. CCHC-type zinc fingers lie at residues 52 to 69 (DICY…DCDL), 72 to 89 (DACY…DCKE), 96 to 113 (QCCY…DCDH), 117 to 134 (QKCY…DCTK), 135 to 152 (VKCY…NCSK), and 156 to 173 (VNCY…ECTI). An omega-N-methylarginine mark is found at A73, R79, and G80.

As to quaternary structure, associates with the 40S ribosomal subunit, the 80S ribosome and with polysomes. Arginine methylation by PRMT1 in the Arg/Gly-rich region impedes RNA binding. In terms of tissue distribution, expressed in the liver, kidney, spleen, testis, lung, muscle and adrenal glands.

It is found in the nucleus. The protein resides in the cytoplasm. The protein localises to the endoplasmic reticulum. Functionally, single-stranded DNA-binding protein that preferentially binds to the sterol regulatory element (SRE) sequence 5'-GTGCGGTG-3', and thereby mediates transcriptional repression. Has a role as transactivator of the Myc promoter. Binds single-stranded RNA in a sequence-specific manner. Binds G-rich elements in target mRNA coding sequences. Prevents G-quadruplex structure formation in vitro, suggesting a role in supporting translation by resolving stable structures on mRNAs. In terms of biological role, binds to RNA. The sequence is that of CCHC-type zinc finger nucleic acid binding protein from Homo sapiens (Human).